A 363-amino-acid chain; its full sequence is Pyruvate dehydrogenase E1 component subunit alpha, mitochondrial (363 aa).

A mitochondrion-targeting transit peptide spans Arg-1–Asn-2. N6-acetyllysine; alternate is present on Lys-36. Lys-36 carries the N6-succinyllysine; alternate modification. Pyruvate contacts are provided by His-65, Tyr-91, Arg-92, Ala-130, Gly-138, Val-140, Asp-169, Gly-170, Ala-171, Asn-198, and Tyr-200. The thiamine diphosphate site is built by Tyr-91 and Arg-92. Thiamine diphosphate is bound by residues Gly-138, Val-140, Asp-169, Gly-170, Ala-171, and Asn-198. Position 169 (Asp-169) interacts with Mg(2+). The Mg(2+) site is built by Asn-198 and Tyr-200. Ser-205 carries the phosphoserine; by PDK1 modification. An N6-acetyllysine; alternate modification is found at Lys-217. N6-succinyllysine; alternate is present on Lys-217. N6-acetyllysine is present on Lys-240. At Lys-250 the chain carries N6-succinyllysine. Residue His-265 coordinates thiamine diphosphate. Phosphoserine; by PDK1, PDK2, PDK3 and PDK4 is present on Ser-266. Position 268 is a phosphoserine (Ser-268). Ser-273 is modified (phosphoserine; by PDK1, PDK2, PDK3 and PDK4). Phosphotyrosine is present on Tyr-274. Lys-286 carries the N6-acetyllysine; alternate modification. Position 286 is an N6-succinyllysine; alternate (Lys-286). Lys-294 and Lys-309 each carry N6-acetyllysine. Lys-358 carries the post-translational modification N6-succinyllysine.

Heterotetramer of two PDHA1 and two PDHB subunits. The heterotetramer interacts with DLAT, and is part of the multimeric pyruvate dehydrogenase complex that contains multiple copies of pyruvate dehydrogenase (E1), dihydrolipoamide acetyltransferase (DLAT, E2) and lipoamide dehydrogenase (DLD, E3). These subunits are bound to an inner core composed of about 48 DLAT and 12 PDHX molecules. Thiamine diphosphate is required as a cofactor. The cofactor is Mg(2+). Post-translationally, phosphorylation at Ser-205, Ser-266 and Ser-273 by PDK family kinases inactivates the enzyme; for this phosphorylation at a single site is sufficient. Phosphorylation at Ser-266 interferes with access to active site, and thereby inactivates the enzyme. Dephosphorylation at all three sites, i.e. at Ser-205, Ser-266 and Ser-273, is required for reactivation. Acetylation alters the phosphorylation pattern. Deacetylated by SIRT3.

It localises to the mitochondrion matrix. It carries out the reaction N(6)-[(R)-lipoyl]-L-lysyl-[protein] + pyruvate + H(+) = N(6)-[(R)-S(8)-acetyldihydrolipoyl]-L-lysyl-[protein] + CO2. Its activity is regulated as follows. Pyruvate dehydrogenase activity is inhibited by phosphorylation of PDHA1; it is reactivated by dephosphorylation. Its function is as follows. The pyruvate dehydrogenase complex catalyzes the overall conversion of pyruvate to acetyl-CoA and CO(2), and thereby links the glycolytic pathway to the tricarboxylic cycle. The chain is Pyruvate dehydrogenase E1 component subunit alpha, mitochondrial (PDHA) from Sminthopsis macroura (Stripe-faced dunnart).